The sequence spans 180 residues: Large ribosomal subunit protein uL18m (180 aa).

The protein belongs to the universal ribosomal protein uL18 family. As to quaternary structure, component of the mitochondrial ribosome large subunit (39S) which comprises a 16S rRNA and about 50 distinct proteins.

It localises to the mitochondrion. Together with thiosulfate sulfurtransferase (TST), acts as a mitochondrial import factor for the cytosolic 5S rRNA. The precursor form shows RNA chaperone activity; is able to fold the 5S rRNA into an import-competent conformation that is recognized by rhodanese (TST). Both the cytoplasmic and mitochondrial forms are able to bind to the helix IV-loop D in the gamma domain of the 5S rRNA. The chain is Large ribosomal subunit protein uL18m (Mrpl18) from Mus musculus (Mouse).